The following is a 268-amino-acid chain: Phosphatidylglycerol--prolipoprotein diacylglyceryl transferase (268 aa).

7 helical membrane passes run 14–34 (IIFSLGPISLRWYGLMYLIGF), 60–80 (LLFNGFAGVFLGGRIGYVLFY), 95–115 (VWEGGMSFHGGLIGVIVAMLV), 124–144 (FWVVADFVAPLIPFGLGMGRI), 176–196 (SQLYEFVLEGIVLFCILNWFI), 203–223 (GSVAGLFLLFYGLFRFIVEFF), and 238–258 (ISMGQILSTPMILLGALFIVL). Arg143 is a binding site for a 1,2-diacyl-sn-glycero-3-phospho-(1'-sn-glycerol).

This sequence belongs to the Lgt family.

The protein resides in the cell inner membrane. It carries out the reaction L-cysteinyl-[prolipoprotein] + a 1,2-diacyl-sn-glycero-3-phospho-(1'-sn-glycerol) = an S-1,2-diacyl-sn-glyceryl-L-cysteinyl-[prolipoprotein] + sn-glycerol 1-phosphate + H(+). It participates in protein modification; lipoprotein biosynthesis (diacylglyceryl transfer). Functionally, catalyzes the transfer of the diacylglyceryl group from phosphatidylglycerol to the sulfhydryl group of the N-terminal cysteine of a prolipoprotein, the first step in the formation of mature lipoproteins. This chain is Phosphatidylglycerol--prolipoprotein diacylglyceryl transferase, found in Mannheimia succiniciproducens (strain KCTC 0769BP / MBEL55E).